The primary structure comprises 107 residues: Prokineticin-2 (107 aa).

A signal peptide spans 1–26 (MEDPRCAPLLLLLLLPLLLTPPAGDA). 5 disulfides stabilise this stretch: cysteine 33/cysteine 45, cysteine 39/cysteine 57, cysteine 44/cysteine 85, cysteine 67/cysteine 93, and cysteine 87/cysteine 103.

The protein belongs to the AVIT (prokineticin) family. As to expression, expressed at high levels in testis and at lower levels in brain, lung, ovary, spleen, thymus and uterus.

Its subcellular location is the secreted. Its function is as follows. May function as an output molecule from the suprachiasmatic nucleus (SCN) that transmits behavioral circadian rhythm. May also function locally within the SCN to synchronize output. Potently contracts gastrointestinal (GI) smooth muscle. The chain is Prokineticin-2 (Prok2) from Rattus norvegicus (Rat).